The sequence spans 350 residues: GTPase Obg (350 aa).

An Obg domain is found at 1 to 159; the sequence is MKLVDEAEIE…RTLKLELKLL (159 aa). The disordered stretch occupies residues 127 to 147; that stretch reads NMHFKSSTNRSPRQALPGEPG. One can recognise an OBG-type G domain in the interval 160-337; that stretch reads ADVGLLGFPN…IMSRIMAFFD (178 aa). GTP contacts are provided by residues 166–173, 191–195, 213–216, 287–290, and 318–320; these read GFPNAGKS, FTTLY, DIPG, NKAD, and SAL. Ser173 and Thr193 together coordinate Mg(2+).

The protein belongs to the TRAFAC class OBG-HflX-like GTPase superfamily. OBG GTPase family. Monomer. The cofactor is Mg(2+).

The protein localises to the cytoplasm. Its function is as follows. An essential GTPase which binds GTP, GDP and possibly (p)ppGpp with moderate affinity, with high nucleotide exchange rates and a fairly low GTP hydrolysis rate. Plays a role in control of the cell cycle, stress response, ribosome biogenesis and in those bacteria that undergo differentiation, in morphogenesis control. This Stenotrophomonas maltophilia (strain R551-3) protein is GTPase Obg.